Reading from the N-terminus, the 786-residue chain is Phenylalanine--tRNA ligase beta subunit (786 aa).

One can recognise a tRNA-binding domain in the interval Leu39 to His150. In terms of domain architecture, B5 spans Tyr397–Ala474. The Mg(2+) site is built by Asp452, Asp458, Glu461, and Glu462. The FDX-ACB domain maps to Ser693–Arg786.

It belongs to the phenylalanyl-tRNA synthetase beta subunit family. Type 1 subfamily. Tetramer of two alpha and two beta subunits. It depends on Mg(2+) as a cofactor.

The protein localises to the cytoplasm. The catalysed reaction is tRNA(Phe) + L-phenylalanine + ATP = L-phenylalanyl-tRNA(Phe) + AMP + diphosphate + H(+). In Wolinella succinogenes (strain ATCC 29543 / DSM 1740 / CCUG 13145 / JCM 31913 / LMG 7466 / NCTC 11488 / FDC 602W) (Vibrio succinogenes), this protein is Phenylalanine--tRNA ligase beta subunit.